Consider the following 502-residue polypeptide: GTPase Obg (502 aa).

The Obg domain maps to asparagine 2–methionine 159. Positions alanine 160–glutamine 341 constitute an OBG-type G domain. GTP-binding positions include glycine 166–serine 173, phenylalanine 191–glutamine 195, aspartate 212–glycine 215, asparagine 292–aspartate 295, and serine 322–valine 324. 2 residues coordinate Mg(2+): serine 173 and threonine 193. The 81-residue stretch at aspartate 364 to proline 444 folds into the OCT domain.

This sequence belongs to the TRAFAC class OBG-HflX-like GTPase superfamily. OBG GTPase family. In terms of assembly, monomer. Mg(2+) serves as cofactor.

It is found in the cytoplasm. In terms of biological role, an essential GTPase which binds GTP, GDP and possibly (p)ppGpp with moderate affinity, with high nucleotide exchange rates and a fairly low GTP hydrolysis rate. Plays a role in control of the cell cycle, stress response, ribosome biogenesis and in those bacteria that undergo differentiation, in morphogenesis control. In Corynebacterium efficiens (strain DSM 44549 / YS-314 / AJ 12310 / JCM 11189 / NBRC 100395), this protein is GTPase Obg.